A 343-amino-acid polypeptide reads, in one-letter code: Glucan endo-1,3-beta-glucosidase, acidic isoform GI9 (343 aa).

Residues 1–29 (MTLCIKNGFLAAALVLVGLLICSIQMIGA) form the signal peptide. The residue at position 30 (Gln30) is a Pyrrolidone carboxylic acid. Glu124 serves as the catalytic Proton donor. The active-site Nucleophile is Glu264.

This sequence belongs to the glycosyl hydrolase 17 family.

Its subcellular location is the secreted. The protein localises to the extracellular space. It catalyses the reaction Hydrolysis of (1-&gt;3)-beta-D-glucosidic linkages in (1-&gt;3)-beta-D-glucans.. Functionally, implicated in the defense of plants against pathogens. The polypeptide is Glucan endo-1,3-beta-glucosidase, acidic isoform GI9 (PR2) (Nicotiana tabacum (Common tobacco)).